The primary structure comprises 462 residues: N-myc proto-oncogene protein (462 aa).

Residues 19-47 form an interaction with AURKA region; that stretch reads LEFDSLQPCFYPDEDDFYFGGPDSTPPGE. The segment at 61–90 is interaction with AURKA and FBXW7; it reads LSPSRAFPEHSPEPSNWATEMLLPEADLWG. The 9aaTAD signature appears at 76-85; the sequence is NWATEMLLPE. Disordered regions lie at residues 134–177, 232–289, and 332–390; these read KLQH…ATLP, AAPA…SSNN, and APSP…LERQ. 2 stretches are compositionally biased toward low complexity: residues 143–176 and 232–244; these read GVSS…GATL and AAPA…PASS. Acidic residues predominate over residues 257–276; the sequence is TLSDSDDEDDEEEDEEEEID. Ser259 and Ser261 each carry phosphoserine; by CK2. Residues 379–431 enclose the bHLH domain; that stretch reads ERRRNHNILERQRRNDLRSSFLTLRDHVPELVKNEKAAKVVILKKATEYVHAL. Residues 431–452 form a leucine-zipper region; that stretch reads LQANEHQLLLEKEKLQARQQQL.

As to quaternary structure, efficient DNA binding requires dimerization with another bHLH protein. Binds DNA as a heterodimer with MAX. Interacts with KDM5A, KDM5B and HUWE1. Interacts with MYCNOS. Interacts with AURKA; interaction is phospho-independent and triggers AURKA activation; AURKA competes with FBXW7 for binding to unphosphorylated MYCN but not for binding to unphosphorylated MYCN. Interacts with FBXW7; FBXW7 competes with AURKA for binding to unphosphorylated MYCN but not for binding to phosphorylated MYCN. Post-translationally, phosphorylated by GSK3-beta which may promote its degradation. Phosphorylated by AURKA.

Its subcellular location is the nucleus. Its function is as follows. Positively regulates the transcription of MYCNOS in neuroblastoma cells. This chain is N-myc proto-oncogene protein (Mycn), found in Mus musculus (Mouse).